The sequence spans 518 residues: Putative cytochrome P450 CYP13A7 (518 aa).

Cys464 serves as a coordination point for heme.

It belongs to the cytochrome P450 family. The cofactor is heme.

Functionally, cytochromes P450 are a group of heme-thiolate monooxygenases. They oxidize a variety of structurally unrelated compounds, including steroids, fatty acids, and xenobiotics. This Caenorhabditis elegans protein is Putative cytochrome P450 CYP13A7 (cyp-13A7).